A 194-amino-acid polypeptide reads, in one-letter code: Glycerol-3-phosphate acyltransferase 2 (194 aa).

5 helical membrane passes run 1–21, 64–84, 112–132, 135–155, and 156–173; these read MWLL…AYVV, VLAV…LAAL, LAMA…VVIF, YISL…IYFH, and RPWP…LVIY.

The protein belongs to the PlsY family. In terms of assembly, probably interacts with PlsX.

It localises to the cell membrane. The enzyme catalyses an acyl phosphate + sn-glycerol 3-phosphate = a 1-acyl-sn-glycero-3-phosphate + phosphate. The protein operates within lipid metabolism; phospholipid metabolism. Functionally, catalyzes the transfer of an acyl group from acyl-phosphate (acyl-PO(4)) to glycerol-3-phosphate (G3P) to form lysophosphatidic acid (LPA). This enzyme utilizes acyl-phosphate as fatty acyl donor, but not acyl-CoA or acyl-ACP. This chain is Glycerol-3-phosphate acyltransferase 2, found in Moorella thermoacetica (strain ATCC 39073 / JCM 9320).